We begin with the raw amino-acid sequence, 167 residues long: Putative pre-16S rRNA nuclease (167 aa).

It belongs to the YqgF nuclease family.

The protein resides in the cytoplasm. Functionally, could be a nuclease involved in processing of the 5'-end of pre-16S rRNA. The chain is Putative pre-16S rRNA nuclease from Streptomyces coelicolor (strain ATCC BAA-471 / A3(2) / M145).